Reading from the N-terminus, the 288-residue chain is Energy-coupling factor transporter ATP-binding protein EcfA2 (288 aa).

One can recognise an ABC transporter domain in the interval 2–244 (IKFEKVNYTY…VDFLKAHELG (243 aa)). 39–46 (GHTGSGKS) is a binding site for ATP. Glu170 functions as the Proton acceptor in the catalytic mechanism.

Belongs to the ABC transporter superfamily. Energy-coupling factor EcfA family. As to quaternary structure, forms a stable energy-coupling factor (ECF) transporter complex composed of 2 membrane-embedded substrate-binding proteins (S component), 2 ATP-binding proteins (A component) and 2 transmembrane proteins (T component). In L.lactis forms a stable complex with EcfA' and EcfT and substrate-binding components. In E.coli forms a stable complex with EcfA, EcfT and individually with 3 tested substrate-binding components (BioY, NiaX and ThiT) with a stoichiometry of 1.1:1:1. The core ECF complex interacts with a number of substrate-specific binding components, including BioY, BioY2, HmpT, NiaX, PanT, QueT, RibU and ThiT.

Its subcellular location is the cell membrane. ATP-binding (A) component of a common energy-coupling factor (ECF) ABC-transporter complex. Unlike classic ABC transporters this ECF transporter provides the energy necessary to transport a number of different substrates. In this organism these probably include biotin, thiamine precursor, niacin, pantothenic acid, queuosine precursor, riboflavin and thiamine. Uptake of niacin or riboflavin into proteosomes containing EcfA1A2T and Niax or RibU has been demonstrated. Uptake requires hydrolyzable Mg-ATP and is substrate-specific; NiaX-containing proteosomes did not transport riboflavin. The chain is Energy-coupling factor transporter ATP-binding protein EcfA2 from Lactococcus lactis subsp. cremoris (strain MG1363).